Reading from the N-terminus, the 207-residue chain is MANNNLKKLLLSPISDNNPIALQILGICSALAVTTQLQTAFVMAIAVSLVTAFSSMFISMIRNYIPNSIRIIVQMAIIASLVILVDQILRAYVYDLSKQLSVFVGLIITNCIVMGRAEAFAMKSAPLESFVDGIGNGLGYGAMLVIVAFLRELIGSGKIFGVTVLQTIQDGGWYQANGLFLLAPSAFFIIGFVIWAIRTWKPEQVEK.

Helical transmembrane passes span 20-40 (IALQILGICSALAVTTQLQTA), 41-61 (FVMAIAVSLVTAFSSMFISMI), 69-89 (IRIIVQMAIIASLVILVDQIL), 102-122 (VFVGLIITNCIVMGRAEAFAM), 130-150 (FVDGIGNGLGYGAMLVIVAFL), and 177-197 (NGLFLLAPSAFFIIGFVIWAI).

Belongs to the NqrDE/RnfAE family. In terms of assembly, composed of six subunits; NqrA, NqrB, NqrC, NqrD, NqrE and NqrF.

The protein resides in the cell inner membrane. The enzyme catalyses a ubiquinone + n Na(+)(in) + NADH + H(+) = a ubiquinol + n Na(+)(out) + NAD(+). In terms of biological role, NQR complex catalyzes the reduction of ubiquinone-1 to ubiquinol by two successive reactions, coupled with the transport of Na(+) ions from the cytoplasm to the periplasm. NqrA to NqrE are probably involved in the second step, the conversion of ubisemiquinone to ubiquinol. The polypeptide is Na(+)-translocating NADH-quinone reductase subunit D (Haemophilus ducreyi (strain 35000HP / ATCC 700724)).